A 186-amino-acid chain; its full sequence is ADP-ribosylation factor-like protein 8 (186 aa).

The note=Mediates targeting to membranes intramembrane region spans 1–19 (MLALINRILEWFKSIFWKE). Residues 29–35 (QFSGKTT), 71–75 (DIGGQ), and 130–133 (NKRD) contribute to the GTP site.

The protein belongs to the small GTPase superfamily. Arf family. In terms of assembly, interacts with tubulin. Interacts (in GTP-bound form) with Rilpl. Interacts with unc-104. As to expression, expressed throughout development, from embryo to adult stage, in different tissues such as larval motor neurons, salivary glands, testis and ovaries (at protein level).

The protein resides in the lysosome membrane. It localises to the synapse. Its subcellular location is the cell projection. The protein localises to the axon. It is found in the perikaryon. Required for normal functioning of the late endocytic pathway including lysosome motility and late endosome-lysosome fusion. Not required for the delivery of lysosomal membrane protein-containing vesicles to late endosomes. In larval motor neurons, mediates the anterograde axonal long-range transport of presynaptic lysosome-related vesicles required for presynaptic biogenesis and synaptic function. Acts downstream of Rab2 during presynaptic precursor vesicle biogenesis. Essential role in chromosome segregation. This is ADP-ribosylation factor-like protein 8 from Drosophila melanogaster (Fruit fly).